The primary structure comprises 272 residues: NH(3)-dependent NAD(+) synthetase (272 aa).

45–52 provides a ligand contact to ATP; sequence GISGGQDS. Asp-51 provides a ligand contact to Mg(2+). Arg-138 lines the deamido-NAD(+) pocket. Residue Thr-158 coordinates ATP. Glu-163 serves as a coordination point for Mg(2+). Lys-171 and Asp-178 together coordinate deamido-NAD(+). The ATP site is built by Lys-187 and Thr-209. 258–259 provides a ligand contact to deamido-NAD(+); the sequence is HK.

Belongs to the NAD synthetase family. In terms of assembly, homodimer.

The enzyme catalyses deamido-NAD(+) + NH4(+) + ATP = AMP + diphosphate + NAD(+) + H(+). It participates in cofactor biosynthesis; NAD(+) biosynthesis; NAD(+) from deamido-NAD(+) (ammonia route): step 1/1. Functionally, catalyzes the ATP-dependent amidation of deamido-NAD to form NAD. Uses ammonia as a nitrogen source. This Bacillus cereus (strain Q1) protein is NH(3)-dependent NAD(+) synthetase.